The chain runs to 218 residues: Large ribosomal subunit protein bL25 (218 aa).

Positions 186–218 are disordered; sequence AVEEEVPAEDEEIMPEPEVIGEEDEGDEEEPEE.

Belongs to the bacterial ribosomal protein bL25 family. CTC subfamily. As to quaternary structure, part of the 50S ribosomal subunit; part of the 5S rRNA/L5/L18/L25 subcomplex. Contacts the 5S rRNA. Binds to the 5S rRNA independently of L5 and L18.

Its function is as follows. This is one of the proteins that binds to the 5S RNA in the ribosome where it forms part of the central protuberance. The protein is Large ribosomal subunit protein bL25 of Halothermothrix orenii (strain H 168 / OCM 544 / DSM 9562).